The primary structure comprises 400 residues: MSYQFEKNKLYAYLGEELVEALKRNEAIIAGGAITSLFNNKEINDVDIYFRSDKKACSFLEECWNSNVYVTSHTKKATLFIKKRLKLQMIHFKFFSDAESIFNTFDFTVCMGAFDFKTEAFTLHEDFLKHNSQRILKFNSQTAFPIVSLLRVQKYTDKEYTISKPEFIRIVLTCMDLTINTYEELKDQMGGMYGINYDKLFEDEKDEDFNLREAVDKIADMVLDEDYFKEPVNLEFNDLDDLLNDINKSPVMTLKINDDQYRIGLDGFLKESVSAPCTEIKLDTKDFFDKTNFYKFVRKQNGKLTSFYDKNFEYVIGEEAKAEGVIDSWSNSGKLFFNEKAAIEQSTYYGKEDGVLIEVKIKEKDFVDADNGKVEATACQVIREVSKDEWKEYISANNSK.

Functionally, counteracts the host Gabija antiviral defense system. Probable nucleotidyltransferase. The polypeptide is Gabija anti-defense 2 (Bacillus phage SPbetaL7).